A 148-amino-acid chain; its full sequence is Probable glycine cleavage system H protein 2 (148 aa).

The region spanning V32 to K114 is the Lipoyl-binding domain. K73 is modified (N6-lipoyllysine).

It belongs to the GcvH family. The glycine cleavage system is composed of four proteins: P, T, L and H. Requires (R)-lipoate as cofactor.

Functionally, the glycine cleavage system catalyzes the degradation of glycine. The H protein shuttles the methylamine group of glycine from the P protein to the T protein. The sequence is that of Probable glycine cleavage system H protein 2 from Sulfurisphaera tokodaii (strain DSM 16993 / JCM 10545 / NBRC 100140 / 7) (Sulfolobus tokodaii).